The chain runs to 1078 residues: A type blood alpha-D-galactosamine galactosaminidase (1078 aa).

A signal peptide spans Met1–Ala26. A glycoside hydrolase 36 domain region spans residues Pro306 to Gly570. Asp463 (nucleophile) is an active-site residue. Asp532 is an active-site residue. The interval Pro699–Ala1078 is not required for activity on soluble substrates.

Belongs to the glycosyl hydrolase 36 family.

It carries out the reaction an alpha-D-galactosaminyl-(1-&gt;3)-[alpha-L-fucosyl-(1-&gt;2)]-beta-D-galactosyl derivative + H2O = D-galactosamine + an alpha-L-fucosyl-(1-&gt;2)-beta-D-galactosyl derivative. Its function is as follows. One of an enzyme pair that work together to convert the A antigen to the H antigen of the O blood type, which together release galactosamine. Catalyzes the second step in the conversion, acts on the product of the first reaction (FpGalNAcDeAc, AC P0DTR4). Is specific for galactosamine containing sugars, does not cleave GalNAc residues. This Flavonifractor plautii (Fusobacterium plautii) protein is A type blood alpha-D-galactosamine galactosaminidase.